Consider the following 1820-residue polypeptide: Kinesin-like protein KIF20B (1820 aa).

The 422-residue stretch at 58–479 (YLQVCLRIRP…LKFSAIAQKV (422 aa)) folds into the Kinesin motor domain. 152–159 (GLTNSGKT) is a binding site for ATP. Ser-488 is subject to Phosphoserine. Coiled coils occupy residues 523–603 (ENSL…KIRE) and 674–793 (GFED…MENT). Thr-560 bears the Phosphothreonine mark. Positions 829–866 (SERKRVNENELQQDEPPAKKGSIHVSSAITEDQKKSEE) are disordered. Ser-997 is subject to Phosphoserine. The segment at 1050 to 1107 (ENSFHSSIEAIWEECKEIVKASSKKSHQIEELEQQIEKLQAEVKGYKDENNRLKEKEH) is necessary and sufficient for interaction with SHTN1. Over residues 1247–1264 (EEEEETNRQETEKLKEEL) the composition is skewed to basic and acidic residues. The tract at residues 1247 to 1275 (EEEEETNRQETEKLKEELSASSARTQNLK) is disordered. The span at 1265–1274 (SASSARTQNL) shows a compositional bias: polar residues. Residues 1560-1820 (IETQIMDIKP…KRRLRTKTAK (261 aa)) form an interaction with PIN1 region. At Ser-1588 the chain carries Phosphoserine. Thr-1644 bears the Phosphothreonine; by CDK1 mark. Ser-1658, Ser-1715, and Ser-1740 each carry phosphoserine. Polar residues predominate over residues 1760–1772 (LSNVEASKENVSQ). The segment at 1760–1781 (LSNVEASKENVSQPKRAKRKLY) is disordered.

This sequence belongs to the TRAFAC class myosin-kinesin ATPase superfamily. Kinesin family. Oligomerizes (via kinesin motor domain). Associates with microtubules. Interacts (via C-terminal globular tail region) with PIN1 (via WW domain). Interacts with PRC1. Interacts with SHTN1 (via N-terminus); the interaction is direct and promotes the association of SHTN1 to microtubules in primary neurons. Phosphorylated during mitosis by CDK1. As to expression, brain, ovary, kidney and testis (at protein level). Overexpressed in bladder cancer cells (at protein level). Expressed in testis. Overexpressed in bladder cancer cells.

Its subcellular location is the nucleus. It is found in the cytoplasm. It localises to the cytoskeleton. The protein localises to the microtubule organizing center. The protein resides in the centrosome. Its subcellular location is the nucleolus. It is found in the nucleoplasm. It localises to the spindle. The protein localises to the spindle pole. The protein resides in the midbody. Its subcellular location is the cell projection. It is found in the axon. It localises to the growth cone. Plus-end-directed motor enzyme that is required for completion of cytokinesis. Required for proper midbody organization and abscission in polarized cortical stem cells. Plays a role in the regulation of neuronal polarization by mediating the transport of specific cargos. Participates in the mobilization of SHTN1 and in the accumulation of PIP3 in the growth cone of primary hippocampal neurons in a tubulin and actin-dependent manner. In the developing telencephalon, cooperates with SHTN1 to promote both the transition from the multipolar to the bipolar stage and the radial migration of cortical neurons from the ventricular zone toward the superficial layer of the neocortex. Involved in cerebral cortex growth. Acts as an oncogene for promoting bladder cancer cells proliferation, apoptosis inhibition and carcinogenic progression. This Homo sapiens (Human) protein is Kinesin-like protein KIF20B.